We begin with the raw amino-acid sequence, 692 residues long: MELIFQNVWFVPLFPFLASILLGIGLFFFPNSIKKFRRLSSFISIMFLNIAMLLSFHFFWQQITGSPIHRYLWSWVLYKNFVLEIGYLLDPLTSIMLVLVTTVAVMVMIYSDSYMFYDEGYIKFFCYLSLFTASMLGLVLSPNLIQVYIFWELVGMCSYLLIGFWFTRPSAANACQKAFVTNRIGDFGLLLGILGFYWITGSFDFQQLSKRFFELLSYNQINLVFATLCALFLFLGPVAKSAQFPLHIWLPDAMEGPTPISALIHAATMVAAGIFLVARMFPLFQMLPFVMSIISWTGAITALLGATIALAQKDLKKGLAYSTMSQLGYMMLALGIGSYKAGLFHLITHAYSKALLFLGSGSVIHSMEPIVGYHPNKSQNMIFMGGLRQYMPITAITFLFGTLSLCGIPPFACFWSKDEILVNSWLHFPILGSIAFFTAGLTAFYMFRIYFLTFEGDFRGHFFDDVKKLSSISIWGSLEFNKEQFKLDKKSTLYPKEANNIMLFPLIILTIPTVFIGFIGILFDENKMNVDSLSYWLTLSINSFNYSNSEKFLEFLFNAIPSVSIAFFGILIAFYLYGPNFSFLKKEKKKLQLKSEIDIVLKSFSNFIYNWSYYRAYIDGFYSSFFIKGLRFLIKIVSFIDRWIIDGIINGIGIFSFFGGESLKYIEGGRISSYLFFIIFCMFLFFLYSYII.

A run of 17 helical transmembrane segments spans residues 9 to 29 (WFVP…LFFF), 39 to 59 (LSSF…FHFF), 89 to 109 (LDPL…MVMI), 120 to 140 (GYIK…GLVL), 147 to 167 (VYIF…FWFT), 184 to 204 (IGDF…GSFD), 219 to 239 (NQIN…GPVA), 258 to 278 (TPIS…FLVA), 289 to 309 (FVMS…ATIA), 327 to 347 (LGYM…FHLI), 354 to 374 (ALLF…VGYH), 395 to 415 (AITF…ACFW), 425 to 445 (WLHF…TAFY), 503 to 523 (LFPL…GILF), 555 to 575 (FLFN…IAFY), 643 to 663 (WIID…GESL), and 671 to 691 (ISSY…YSYI).

This sequence belongs to the complex I subunit 5 family. In terms of assembly, NDH is composed of at least 16 different subunits, 5 of which are encoded in the nucleus.

It localises to the plastid. Its subcellular location is the chloroplast thylakoid membrane. It catalyses the reaction a plastoquinone + NADH + (n+1) H(+)(in) = a plastoquinol + NAD(+) + n H(+)(out). The catalysed reaction is a plastoquinone + NADPH + (n+1) H(+)(in) = a plastoquinol + NADP(+) + n H(+)(out). Functionally, NDH shuttles electrons from NAD(P)H:plastoquinone, via FMN and iron-sulfur (Fe-S) centers, to quinones in the photosynthetic chain and possibly in a chloroplast respiratory chain. The immediate electron acceptor for the enzyme in this species is believed to be plastoquinone. Couples the redox reaction to proton translocation, and thus conserves the redox energy in a proton gradient. This chain is NAD(P)H-quinone oxidoreductase subunit 5, chloroplastic (ndhF), found in Marchantia polymorpha (Common liverwort).